The primary structure comprises 115 residues: Skin calcitonin gene-related peptide (115 aa).

The signal sequence occupies residues 1-25; that stretch reads MVLLKISSLLAVLGLLVCQMYSSQA. The propeptide at 26 to 69 is removed in mature form by a carboxypeptidase; that stretch reads APARRALEPLPDRVTEAHRLLRALIRELTAEDMEASSSGAAHKR. A disulfide bridge connects residues cysteine 71 and cysteine 76. At phenylalanine 106 the chain carries Phenylalanine amide. Residues 107–115 constitute a propeptide, removed in mature form by an endoprotease; that stretch reads GRRRRSLHV.

In terms of tissue distribution, skin, intestine and brain.

The protein resides in the secreted. In terms of biological role, CGRP induces vasodilation. It dilates a variety of vessels including the coronary, cerebral and systemic vasculature. Its abundance in the CNS also points toward a neurotransmitter or neuromodulator role. This is Skin calcitonin gene-related peptide from Phyllomedusa bicolor (Two-colored leaf frog).